A 535-amino-acid chain; its full sequence is Probable serine/threonine protein phosphatase 2A regulatory subunit B''delta (535 aa).

Positions 67-104 (SGTNSGSNSPLASMFPARNGPPLSPRNSTGSPRIARQR) are disordered. 2 consecutive EF-hand domains span residues 174-209 (VPSFFSTSIFKKVDTNNTGFVKREDFIDYWVKGNML) and 387-422 (SSEPSLEYWFKCIDLDANGVLTRNELQFFYEEQLHR). Ca(2+)-binding residues include Asp400, Asp402, Asn404, and Glu411.

As to quaternary structure, PP2A consists of a common heterodimeric core enzyme, composed of a 36 kDa catalytic subunit (subunit C) and a 65 kDa constant regulatory subunit (PR65 or subunit A), that associates with a variety of regulatory subunits. Proteins that associate with the core dimer include three families of regulatory subunits B (the R2/B/PR55/B55, R3/B''/PR72/PR130/PR59 and R5/B'/B56 families) and cell signaling molecules.

Functionally, probable regulatory subunit of type 2A protein phosphatase. In Arabidopsis thaliana (Mouse-ear cress), this protein is Probable serine/threonine protein phosphatase 2A regulatory subunit B''delta (B''DELTA).